Reading from the N-terminus, the 569-residue chain is Dihydroxy-acid dehydratase (569 aa).

D80 contacts Mg(2+). C121 is a [2Fe-2S] cluster binding site. Mg(2+) contacts are provided by D122 and K123. K123 is modified (N6-carboxylysine). C194 is a binding site for [2Fe-2S] cluster. E446 provides a ligand contact to Mg(2+). S472 (proton acceptor) is an active-site residue.

Belongs to the IlvD/Edd family. In terms of assembly, homodimer. It depends on [2Fe-2S] cluster as a cofactor. Mg(2+) serves as cofactor.

It carries out the reaction (2R)-2,3-dihydroxy-3-methylbutanoate = 3-methyl-2-oxobutanoate + H2O. The catalysed reaction is (2R,3R)-2,3-dihydroxy-3-methylpentanoate = (S)-3-methyl-2-oxopentanoate + H2O. It functions in the pathway amino-acid biosynthesis; L-isoleucine biosynthesis; L-isoleucine from 2-oxobutanoate: step 3/4. Its pathway is amino-acid biosynthesis; L-valine biosynthesis; L-valine from pyruvate: step 3/4. Functions in the biosynthesis of branched-chain amino acids. Catalyzes the dehydration of (2R,3R)-2,3-dihydroxy-3-methylpentanoate (2,3-dihydroxy-3-methylvalerate) into 2-oxo-3-methylpentanoate (2-oxo-3-methylvalerate) and of (2R)-2,3-dihydroxy-3-methylbutanoate (2,3-dihydroxyisovalerate) into 2-oxo-3-methylbutanoate (2-oxoisovalerate), the penultimate precursor to L-isoleucine and L-valine, respectively. This is Dihydroxy-acid dehydratase from Desulforudis audaxviator (strain MP104C).